Reading from the N-terminus, the 136-residue chain is Small ribosomal subunit protein uS9 (136 aa).

The tract at residues 111–136 (DARRTEPHKPSRSTKGPRAKRQKSYR) is disordered. The segment covering 120–136 (PSRSTKGPRAKRQKSYR) has biased composition (basic residues).

Belongs to the universal ribosomal protein uS9 family.

This chain is Small ribosomal subunit protein uS9 (rps9), found in Methanocaldococcus jannaschii (strain ATCC 43067 / DSM 2661 / JAL-1 / JCM 10045 / NBRC 100440) (Methanococcus jannaschii).